Reading from the N-terminus, the 187-residue chain is UPF0232 protein MUL_0004 (187 aa).

A compositionally biased stretch (gly residues) spans 1-12; the sequence is MNGDGEQPGPGD. Disordered regions lie at residues 1–77 and 166–187; these read MNGD…QPLG and ASPSWRKGPRHIAGRGPRDTYG. The segment covering 14–30 has biased composition (basic and acidic residues); sequence AARDELPSMDLVRRTLA. Residues 31–55 are compositionally biased toward low complexity; sequence EARAAARARGQDPGRGFAAGPAPRR.

It belongs to the UPF0232 family.

This chain is UPF0232 protein MUL_0004, found in Mycobacterium ulcerans (strain Agy99).